A 1179-amino-acid chain; its full sequence is MWLFHTLLCIASLALLAAFNVDVARPWLTPKGGAPFVLSSLLHQDPSTNQTWLLVTSPRTKRTPGPLHRCSLVQDEILCHPVEHVPIPKGRHRGVTVVRSHHGVLICIQVLVRRPHSLSSELTGTCSLLGPDLRPQAQANFFDLENLLDPDARVDTGDCYSNKEGGGEDDVNTARQRRALEKEEEEDKEEEEDEEEEEAGTEIAIILDGSGSIDPPDFQRAKDFISNMMRNFYEKCFECNFALVQYGGVIQTEFDLRDSQDVMASLARVQNITQVGSVTKTASAMQHVLDSIFTSSHGSRRKASKVMVVLTDGGIFEDPLNLTTVINSPKMQGVERFAIGVGEEFKSARTARELNLIASDPDETHAFKVTNYMALDGLLSKLRYNIISMEGTVGDALHYQLAQIGFSAQILDERQVLLGAVGAFDWSGGALLYDTRSRRGRFLNQTAAAAADAEAAQYSYLGYAVAVLHKTCSLSYIAGAPRYKHHGAVFELQKEGREASFLPVLEGEQMGSYFGSELCPVDIDMDGSTDFLLVAAPFYHVHGEEGRVYVYRLSEQDGSFSLARILSGHPGFTNARFGFAMAAMGDLSQDKLTDVAIGAPLEGFGADDGASFGSVYIYNGHWDGLSASPSQRIRASTVAPGLQYFGMSMAGGFDISGDGLADITVGTLGQAVVFRSRPVVRLKVSMAFTPSALPIGFNGVVNVRLCFEISSVTTASESGLREALLNFTLDVDVGKQRRRLQCSDVRSCLGCLREWSSGSQLCEDLLLMPTEGELCEEDCFSNASVKVSYQLQTPEGQTDHPQPILDRYTEPFAIFQLPYEKACKNKLFCVAELQLATTVSQQELVVGLTKELTLNINLTNSGEDSYMTSMALNYPRNLQLKRMQKPPSPNIQCDDPQPVASVLIMNCRIGHPVLKRSSAHVSVVWQLEENAFPNRTADITVTVTNSNERRSLANETHTLQFRHGFVAVLSKPSIMYVNTGQGLSHHKEFLFHVHGENLFGAEYQLQICVPTKLRGLQVVAVKKLTRTQASTVCTWSQERACAYSSVQHVEEWHSVSCVIASDKENVTVAAEISWDHSEELLKDVTELQILGEISFNKSLYEGLNAENHRTKITVVFLKDEKYHSLPIIIKGSVGGLLVLIVILVILFKCGFFKRKYQQLNLESIRKAQLKSENLLEEEN.

A signal peptide spans 1–18; sequence MWLFHTLLCIASLALLAA. At 19 to 1124 the chain is on the extracellular side; it reads FNVDVARPWL…VFLKDEKYHS (1106 aa). FG-GAP repeat units lie at residues 22–79 and 80–138; these read DVAR…EILC and HPVE…PQAQ. The N-linked (GlcNAc...) asparagine glycan is linked to Asn49. Disulfide bonds link Cys70-Cys79 and Cys126-Cys159. Positions 145–199 are X-domain (extra domain); sequence ENLLDPDARVDTGDCYSNKEGGGEDDVNTARQRRALEKEEEEDKEEEEDEEEEEA. The tract at residues 158–200 is disordered; sequence DCYSNKEGGGEDDVNTARQRRALEKEEEEDKEEEEDEEEEEAG. The segment covering 182–200 has biased composition (acidic residues); the sequence is KEEEEDKEEEEDEEEEEAG. The VWFA domain maps to 200–389; the sequence is GTEIAIILDG…SKLRYNIISM (190 aa). Residues Asn271 and Asn321 are each glycosylated (N-linked (GlcNAc...) asparagine). Residues 390–442 form an FG-GAP 3 repeat; the sequence is EGTVGDALHYQLAQIGFSAQILDERQVLLGAVGAFDWSGGALLYDTRSRRGRF. N-linked (GlcNAc...) asparagine glycosylation occurs at Asn444. FG-GAP repeat units lie at residues 447–499, 500–560, 563–627, and 631–691; these read AAAA…GREA, SFLP…DGSF, ARIL…GLSA, and QRIR…FTPS. Ca(2+) contacts are provided by Asp522, Asp524, Asp526, Asp530, Asp586, Ser588, Asp590, Asp594, Asp654, Ser656, Asp658, and Asp662. Cys706 and Cys762 are disulfide-bonded. 2 N-linked (GlcNAc...) asparagine glycosylation sites follow: Asn726 and Asn782. A disulfide bridge connects residues Cys823 and Cys829. An N-linked (GlcNAc...) asparagine glycan is attached at Asn857. Cys893 and Cys907 form a disulfide bridge. 2 N-linked (GlcNAc...) asparagine glycosylation sites follow: Asn934 and Asn954. 2 disulfide bridges follow: Cys1008/Cys1033 and Cys1041/Cys1057. N-linked (GlcNAc...) asparagine glycosylation is found at Asn1065 and Asn1096. A helical membrane pass occupies residues 1125–1147; that stretch reads LPIIIKGSVGGLLVLIVILVILF. Residues 1148–1179 lie on the Cytoplasmic side of the membrane; the sequence is KCGFFKRKYQQLNLESIRKAQLKSENLLEEEN. Residues 1150 to 1154 carry the GFFKR motif motif; the sequence is GFFKR.

Belongs to the integrin alpha chain family. In terms of assembly, heterodimer of an alpha and a beta subunit. The alpha subunit is composed of a heavy and a light chains linked by a disulfide bond. Alpha-E associates with beta-7. In terms of tissue distribution, expressed on a subclass of T-lymphocytes known as intra-epithelial lymphocytes which are located between mucosal epithelial cells.

The protein resides in the membrane. Integrin alpha-E/beta-7 is a receptor for E-cadherin. It mediates adhesion of intra-epithelial T-lymphocytes to epithelial cell monolayers. The protein is Integrin alpha-E (ITGAE) of Homo sapiens (Human).